The sequence spans 292 residues: Protease HtpX (292 aa).

Transmembrane regions (helical) follow at residues 5 to 25 (VVLF…VMSV) and 35 to 55 (GLLV…LLLS). Zn(2+) is bound at residue His-140. Residue Glu-141 is part of the active site. His-144 contacts Zn(2+). The next 2 membrane-spanning stretches (helical) occupy residues 155–175 (LLQG…GGII) and 193–213 (IIVF…AMWF). Zn(2+) is bound at residue Glu-218.

This sequence belongs to the peptidase M48B family. The cofactor is Zn(2+).

It localises to the cell inner membrane. In Xanthomonas campestris pv. campestris (strain 8004), this protein is Protease HtpX.